A 427-amino-acid chain; its full sequence is Glutamate-1-semialdehyde 2,1-aminomutase (427 aa).

Lysine 265 is subject to N6-(pyridoxal phosphate)lysine.

It belongs to the class-III pyridoxal-phosphate-dependent aminotransferase family. HemL subfamily. In terms of assembly, homodimer. Pyridoxal 5'-phosphate is required as a cofactor.

It localises to the cytoplasm. The catalysed reaction is (S)-4-amino-5-oxopentanoate = 5-aminolevulinate. It participates in porphyrin-containing compound metabolism; protoporphyrin-IX biosynthesis; 5-aminolevulinate from L-glutamyl-tRNA(Glu): step 2/2. The sequence is that of Glutamate-1-semialdehyde 2,1-aminomutase from Pseudomonas putida (strain ATCC 700007 / DSM 6899 / JCM 31910 / BCRC 17059 / LMG 24140 / F1).